A 74-amino-acid polypeptide reads, in one-letter code: Omwaprin-b (74 aa).

An N-terminal signal peptide occupies residues 1 to 24 (MSSGGLLLLLGLLTLWEVLTPVSS). The region spanning 27 to 71 (RPKKPGLCPPRPQKPCVKECKNDWSCPGQQKCCNYGCIDECRDPI) is the WAP domain. Cystine bridges form between Cys34/Cys59, Cys42/Cys63, Cys46/Cys58, and Cys52/Cys67.

The protein belongs to the venom waprin family. Expressed by the venom gland.

It localises to the secreted. Functionally, damages membranes of susceptible bacteria. Has antibacterial activity against the Gram-positive bacteria B.megaterium and S.warneri. After 45 minutes of treatment with this protein, B.megaterium have no visible pili and are smooth. Has no antibacterial activity against the Gram-positive bacteria B.thuringiensis, S.aureus, S.clavuligerus and B. anthracis, or the Gram-negative bacteria E.coli and A.tumefaciens. Has no hemolytic activity. Does not inhibit the proteinases elastase and cathepsin G. Is not toxic to mice. The protein is Omwaprin-b of Oxyuranus microlepidotus (Inland taipan).